Here is a 478-residue protein sequence, read N- to C-terminus: Methionine aminopeptidase 2-1 (478 aa).

Positions 1 to 124 (MGSKSPEGHN…PRVPLSTLFP (124 aa)) are disordered. Acidic residues predominate over residues 46 to 56 (NDDDDADDDEK). The segment covering 92–104 (KKKKKRKRSKKKA) has biased composition (basic residues). Residue His230 participates in substrate binding. A divalent metal cation-binding residues include Asp251, Asp262, and His331. His339 contacts substrate. A divalent metal cation contacts are provided by Glu364 and Glu459.

The protein belongs to the peptidase M24A family. Methionine aminopeptidase eukaryotic type 2 subfamily. Requires Co(2+) as cofactor. The cofactor is Zn(2+). It depends on Mn(2+) as a cofactor. Fe(2+) serves as cofactor.

Its subcellular location is the cytoplasm. It catalyses the reaction Release of N-terminal amino acids, preferentially methionine, from peptides and arylamides.. In terms of biological role, cotranslationally removes the N-terminal methionine from nascent proteins. The N-terminal methionine is often cleaved when the second residue in the primary sequence is small and uncharged (Met-Ala-, Cys, Gly, Pro, Ser, Thr, or Val). This Aspergillus clavatus (strain ATCC 1007 / CBS 513.65 / DSM 816 / NCTC 3887 / NRRL 1 / QM 1276 / 107) protein is Methionine aminopeptidase 2-1.